Here is a 30-residue protein sequence, read N- to C-terminus: Trypsin inhibitor 2 (30 aa).

Disulfide bonds link C3-C20, C10-C22, and C16-C29.

This sequence belongs to the protease inhibitor I7 (squash-type serine protease inhibitor) family.

It localises to the secreted. Inhibits trypsin. The protein is Trypsin inhibitor 2 of Luffa aegyptiaca (Sponge gourd).